The chain runs to 701 residues: Peptide transporter 3 (701 aa).

The next 9 membrane-spanning stretches (helical) occupy residues 29 to 49 (FSFYGMKTILFIYLITEHEFS), 55 to 75 (FIYHLFTCIAYLTPLIGSIMA), 91 to 111 (IYVVGHVLLSLGAVPFLSYPI), 119 to 139 (GLFVIAFATGCIKPCVSAFAA), 154 to 174 (FSFFYFAINGGSLFAIIITPI), 188 to 208 (FPLAFGVPGVLMLLALILFLM), 269 to 289 (GLLNVAVIFCPLIFFWALFDQ), 318 to 338 (INPVCVLILVPIFEGWVYPAL), and 351 to 371 (AVGGLLTAFSFAIAGVLQLKV). N-linked (GlcNAc...) asparagine glycans are attached at residues asparagine 391 and asparagine 432. Helical transmembrane passes span 575 to 595 (ILWSLPQYIIITLGEVLLSVT), 611 to 631 (VLTAMWLLTVFAGNLIDMMIS), and 641 to 661 (LEFFFYSTLMVIVMGVFILLA).

The protein belongs to the major facilitator superfamily. Proton-dependent oligopeptide transporter (POT/PTR) (TC 2.A.17) family. In terms of tissue distribution, expressed in the AVA interneuron.

It localises to the membrane. In terms of biological role, neuron-specific, H(+)-coupled oligopeptide transporter with broad specificity towards di- and tripeptides in a Na(+) and Cl(-)-independent manner. Shows H(+) channel activity in the absence of peptide substrates. The polypeptide is Peptide transporter 3 (pept-3) (Caenorhabditis elegans).